We begin with the raw amino-acid sequence, 308 residues long: Uridylate cyclase (308 aa).

Mn(2+)-binding residues include D62 and D106.

The protein belongs to the adenylyl cyclase class-4/guanylyl cyclase family. Pyrimidine cyclase subfamily. In terms of assembly, homodimer. It depends on Mn(2+) as a cofactor.

The protein resides in the cytoplasm. The catalysed reaction is GTP = 3',5'-cyclic GMP + diphosphate. It carries out the reaction UTP = 3',5'-cyclic UMP + diphosphate. In terms of biological role, pycsar (pyrimidine cyclase system for antiphage resistance) provides immunity against bacteriophage. The pyrimidine cyclase (PycC) synthesizes cyclic nucleotides in response to infection; these serve as specific second messenger signals. The signals activate the adjacent effector, leading to bacterial cell death and abortive phage infection. A clade D Pycsar system. The pyrimidine cyclase gene of a two-gene Pycsar system, generates cyclic UMP (cUMP) from UTP as well as cGMP from GTP to a lesser extent, has little to no activity on ATP or CTP. Expression of this and adjacent effector PtPycTM (AC A0A4Q9KQH5) probably confers resistance to bacteriophage. The genes are probably only expressed in response to bacteriophage infection. The polypeptide is Uridylate cyclase (Propioniciclava tarda).